A 419-amino-acid polypeptide reads, in one-letter code: Acyl-coenzyme A thioesterase 6 (419 aa).

Catalysis depends on charge relay system residues S232, D324, and H358. The Peroxisome targeting signal signature appears at 417 to 419 (SKL).

It belongs to the C/M/P thioester hydrolase family. As to expression, highly expressed in white adipose tissue. Detected at lower levels in kidney, liver, brown adipose tissue and brain.

The protein localises to the peroxisome. The catalysed reaction is pristanoyl-CoA + H2O = 2,6,10,14-tetramethylpentadecanoate + CoA + H(+). It carries out the reaction phytanoyl-CoA + H2O = 3,7,11,15-tetramethylhexadecanoate + CoA + H(+). Its pathway is lipid metabolism; fatty acid metabolism. Catalyzes the hydrolysis of acyl-CoAs into free fatty acids and coenzyme A (CoASH), regulating their respective intracellular levels. Catalyzes the hydrolysis of phytanoyl-CoA and pristanoyl-CoA, two methyl-branched fatty acids derived from phytol, that enter the body via the diet. The chain is Acyl-coenzyme A thioesterase 6 from Mus musculus (Mouse).